Reading from the N-terminus, the 44-residue chain is Cytochrome b559 subunit beta (44 aa).

Residues 19–35 form a helical membrane-spanning segment; it reads WLAVHTLAVPTVFFVGA. Residue His23 coordinates heme.

This sequence belongs to the PsbE/PsbF family. As to quaternary structure, heterodimer of an alpha subunit and a beta subunit. PSII is composed of 1 copy each of membrane proteins PsbA, PsbB, PsbC, PsbD, PsbE, PsbF, PsbH, PsbI, PsbJ, PsbK, PsbL, PsbM, PsbT, PsbX, PsbY, PsbZ, Psb30/Ycf12, peripheral proteins PsbO, CyanoQ (PsbQ), PsbU, PsbV and a large number of cofactors. It forms dimeric complexes. Heme b is required as a cofactor.

The protein localises to the cellular thylakoid membrane. Its function is as follows. This b-type cytochrome is tightly associated with the reaction center of photosystem II (PSII). PSII is a light-driven water:plastoquinone oxidoreductase that uses light energy to abstract electrons from H(2)O, generating O(2) and a proton gradient subsequently used for ATP formation. It consists of a core antenna complex that captures photons, and an electron transfer chain that converts photonic excitation into a charge separation. The polypeptide is Cytochrome b559 subunit beta (Crocosphaera subtropica (strain ATCC 51142 / BH68) (Cyanothece sp. (strain ATCC 51142))).